A 781-amino-acid chain; its full sequence is ATP-dependent 6-phosphofructokinase (781 aa).

An N-terminal catalytic PFK domain 1 region spans residues 1–394 (MATWMEGKYV…NLATYIKLSK (394 aa)). ATP contacts are provided by residues Gly27, 90–91 (RC), and 120–123 (GDGS). Asp121 contacts Mg(2+). Substrate-binding positions include 166–168 (SID), Arg203, 210–212 (MGR), Glu266, Arg294, and 300–303 (HVQR). Asp168 acts as the Proton acceptor in catalysis. The interdomain linker stretch occupies residues 395–409 (IEQPRQSVMSSENNL). The interval 410-781 (RIGIVNVGAP…ESIMAGTDRK (372 aa)) is C-terminal regulatory PFK domain 2. Residues Arg479, 537–541 (TISNN), Arg575, 582–584 (MGG), Asp638, Arg664, 670–673 (HMQQ), and Arg745 each bind beta-D-fructose 2,6-bisphosphate.

It belongs to the phosphofructokinase type A (PFKA) family. ATP-dependent PFK group I subfamily. Eukaryotic two domain clade 'E' sub-subfamily. In terms of assembly, homotetramer. It depends on Mg(2+) as a cofactor.

The protein localises to the cytoplasm. The catalysed reaction is beta-D-fructose 6-phosphate + ATP = beta-D-fructose 1,6-bisphosphate + ADP + H(+). It functions in the pathway carbohydrate degradation; glycolysis; D-glyceraldehyde 3-phosphate and glycerone phosphate from D-glucose: step 3/4. Allosterically activated by ADP, AMP, or fructose 2,6-bisphosphate, and allosterically inhibited by ATP or citrate. Its function is as follows. Catalyzes the phosphorylation of D-fructose 6-phosphate to fructose 1,6-bisphosphate by ATP, the first committing step of glycolysis. This is ATP-dependent 6-phosphofructokinase (PFK) from Schistosoma mansoni (Blood fluke).